A 310-amino-acid polypeptide reads, in one-letter code: 4-hydroxyproline 2-epimerase (310 aa).

The Proton acceptor role is filled by cysteine 85. Residues glycine 86–histidine 87, histidine 205, and aspartate 231 each bind substrate. Cysteine 235 acts as the Proton donor in catalysis. Glycine 236–threonine 237 provides a ligand contact to substrate.

The protein belongs to the proline racemase family.

It catalyses the reaction trans-4-hydroxy-L-proline = cis-4-hydroxy-D-proline. Functionally, catalyzes the epimerization of trans-4-hydroxy-L-proline (t4LHyp) to cis-4-hydroxy-D-proline (c4DHyp). May be involved in a degradation pathway of t4LHyp, which would allow L.aggregata to grow on t4LHyp as a sole carbon source. Displays no proline racemase activity. The chain is 4-hydroxyproline 2-epimerase from Roseibium aggregatum (strain ATCC 25650 / DSM 13394 / JCM 20685 / NBRC 16684 / NCIMB 2208 / IAM 12614 / B1) (Stappia aggregata).